We begin with the raw amino-acid sequence, 124 residues long: Anamorsin homolog (124 aa).

The span at 1 to 20 (MSSPAPSTSHNAANSTQAFS) shows a compositional bias: polar residues. Disordered stretches follow at residues 1 to 39 (MSSPAPSTSHNAANSTQAFSLKTRRPIDEDDLLTAEDRE) and 40 to 124 (AKST…TDDI). C49, C56, C59, and C61 together coordinate [2Fe-2S] cluster. The tract at residues 49–61 (CATRRRACKNCTC) is fe-S binding site A. Positions 86, 89, 97, and 100 each coordinate [4Fe-4S] cluster. 2 short sequence motifs (cx2C motif) span residues 86 to 89 (CGNC) and 97 to 100 (CAGC). The fe-S binding site B stretch occupies residues 86 to 100 (CGNCAKGDAFRCAGC).

It belongs to the anamorsin family. In terms of assembly, monomer. [2Fe-2S] cluster serves as cofactor. The cofactor is [4Fe-4S] cluster.

It is found in the cytoplasm. The protein localises to the mitochondrion intermembrane space. Its function is as follows. Component of the cytosolic iron-sulfur (Fe-S) protein assembly (CIA) machinery. Required for the maturation of extramitochondrial Fe-S proteins. Part of an electron transfer chain functioning in an early step of cytosolic Fe-S biogenesis, facilitating the de novo assembly of a [4Fe-4S] cluster on the cytosolic Fe-S scaffold complex. Electrons are transferred from NADPH via a FAD- and FMN-containing diflavin oxidoreductase. Together with the diflavin oxidoreductase, also required for the assembly of the diferric tyrosyl radical cofactor of ribonucleotide reductase (RNR), probably by providing electrons for reduction during radical cofactor maturation in the catalytic small subunit. This chain is Anamorsin homolog, found in Trypanosoma brucei brucei (strain 927/4 GUTat10.1).